The following is a 109-amino-acid chain: Aquaporin-2 (109 aa).

Residues Ser1–Arg6 are Cytoplasmic-facing. A helical membrane pass occupies residues Ala7–Leu27. Residues Asn28 to Ser35 lie on the Extracellular side of the membrane. Residues Val36–Leu54 traverse the membrane as a helical segment. Over Gly55 to Gly59 the chain is Cytoplasmic. Residues Ala60–Ala69 constitute an intramembrane region (discontinuously helical). Positions Asn63–Ala65 match the NPA 1 motif. The Cytoplasmic portion of the chain corresponds to Cys70–Arg80. Residues Ala81 to Leu102 traverse the membrane as a helical segment. The Extracellular portion of the chain corresponds to Thr103–Gly109.

This sequence belongs to the MIP/aquaporin (TC 1.A.8) family. Homotetramer. Serine phosphorylation is necessary and sufficient for expression at the apical membrane. Endocytosis is not phosphorylation-dependent. In terms of processing, N-glycosylated.

It is found in the apical cell membrane. Its subcellular location is the basolateral cell membrane. The protein localises to the cell membrane. The protein resides in the cytoplasmic vesicle membrane. It localises to the golgi apparatus. It is found in the trans-Golgi network membrane. It carries out the reaction H2O(in) = H2O(out). The catalysed reaction is glycerol(in) = glycerol(out). Its function is as follows. Forms a water-specific channel that provides the plasma membranes of renal collecting duct with high permeability to water, thereby permitting water to move in the direction of an osmotic gradient. Plays an essential role in renal water homeostasis. Could also be permeable to glycerol. In Amblysomus hottentotus (Hottentot golden mole), this protein is Aquaporin-2.